Reading from the N-terminus, the 217-residue chain is MTQIPPSRLHSPLDRLLVEAQRALDTVFGNPPAERPNPAGDTPDAALAPAQRQHAAGLMRINHVGEVCAQGLYFGQAAVARDDHTRQHLLTAAQEETDHLAWCADRLRELESRPSLFNPLWYAGSYALGAVAGLRGDDWSLGFVVETERQVEAHLDEHLETLPETDQRSRAILRVMKIDEARHADHAEQAGARILPPPIPSAMALASKLMKTIAYRF.

Fe cation contacts are provided by glutamate 66, glutamate 96, histidine 99, glutamate 148, glutamate 180, and histidine 183.

It belongs to the COQ7 family. Requires Fe cation as cofactor.

It localises to the cell membrane. The catalysed reaction is a 5-methoxy-2-methyl-3-(all-trans-polyprenyl)benzene-1,4-diol + AH2 + O2 = a 3-demethylubiquinol + A + H2O. It functions in the pathway cofactor biosynthesis; ubiquinone biosynthesis. In terms of biological role, catalyzes the hydroxylation of 2-nonaprenyl-3-methyl-6-methoxy-1,4-benzoquinol during ubiquinone biosynthesis. In Xanthomonas campestris pv. campestris (strain 8004), this protein is 3-demethoxyubiquinol 3-hydroxylase.